The primary structure comprises 347 residues: NADH-quinone oxidoreductase subunit H (347 aa).

Helical transmembrane passes span 13–33 (LIIALKSVVLLVVLLIVVAYL), 50–70 (PNVVGPWGLFQAFADLLKFVF), 82–102 (GVFLLAPFISAVLAMATWAVI), 115–135 (VGILYIFAISSLEVYGVIMGG), 161–181 (IGFVIVTVLLTVGSLNLTDIV), 198–218 (FLDWNWLCLFPMFVVFFISAL), 248–268 (FLLFFLGEYVAITLMCALMTV), 286–306 (VPGIIWFMLKLCFCFFLFAMV), and 325–345 (VFLPISLFMVVATATFLKVFG).

The protein belongs to the complex I subunit 1 family. In terms of assembly, NDH-1 is composed of 14 different subunits. Subunits NuoA, H, J, K, L, M, N constitute the membrane sector of the complex.

It localises to the cell inner membrane. The enzyme catalyses a quinone + NADH + 5 H(+)(in) = a quinol + NAD(+) + 4 H(+)(out). In terms of biological role, NDH-1 shuttles electrons from NADH, via FMN and iron-sulfur (Fe-S) centers, to quinones in the respiratory chain. The immediate electron acceptor for the enzyme in this species is believed to be ubiquinone. Couples the redox reaction to proton translocation (for every two electrons transferred, four hydrogen ions are translocated across the cytoplasmic membrane), and thus conserves the redox energy in a proton gradient. This subunit may bind ubiquinone. The sequence is that of NADH-quinone oxidoreductase subunit H from Brucella ovis (strain ATCC 25840 / 63/290 / NCTC 10512).